Here is a 212-residue protein sequence, read N- to C-terminus: tRNA (guanine-N(7)-)-methyltransferase (212 aa).

The S-adenosyl-L-methionine site is built by glutamate 44, aspartate 69, aspartate 96, and aspartate 118. The active site involves aspartate 118. Lysine 122 lines the substrate pocket. Residues 124–129 (RHEKRR) form an interaction with RNA region. Substrate contacts are provided by residues aspartate 154 and 191-194 (TEYE).

This sequence belongs to the class I-like SAM-binding methyltransferase superfamily. TrmB family.

The catalysed reaction is guanosine(46) in tRNA + S-adenosyl-L-methionine = N(7)-methylguanosine(46) in tRNA + S-adenosyl-L-homocysteine. The protein operates within tRNA modification; N(7)-methylguanine-tRNA biosynthesis. In terms of biological role, catalyzes the formation of N(7)-methylguanine at position 46 (m7G46) in tRNA. The polypeptide is tRNA (guanine-N(7)-)-methyltransferase (Streptococcus suis (strain 05ZYH33)).